A 246-amino-acid polypeptide reads, in one-letter code: Probable transcriptional regulatory protein HD_0596 (246 aa).

It belongs to the TACO1 family.

It localises to the cytoplasm. The chain is Probable transcriptional regulatory protein HD_0596 from Haemophilus ducreyi (strain 35000HP / ATCC 700724).